A 37-amino-acid polypeptide reads, in one-letter code: M-oxotoxin-Ot2b (37 aa).

As to expression, expressed by the venom gland.

The protein localises to the secreted. Disrupts biological membranes, particularly those rich in phosphocholine. Has antimicrobial activity against Gram-negative bacterium E.coli, Gram-positive bacteria B.subtilis and S.aureus, and hemolytic activity against sheep, pig and guinea pig red blood cells. Has insecticidal activity against S.frugiperda ovarian cells by opening non-selective ion channels. Enhances the insecticidal activity of spider venom neurotoxic peptides. The sequence is that of M-oxotoxin-Ot2b from Oxyopes takobius (Lynx spider).